The sequence spans 306 residues: Curved DNA-binding protein (306 aa).

One can recognise a J domain in the interval aspartate 5–tryptophan 69.

Its subcellular location is the cytoplasm. It localises to the nucleoid. DNA-binding protein that preferentially recognizes a curved DNA sequence. It is probably a functional analog of DnaJ; displays overlapping activities with DnaJ, but functions under different conditions, probably acting as a molecular chaperone in an adaptive response to environmental stresses other than heat shock. Lacks autonomous chaperone activity; binds native substrates and targets them for recognition by DnaK. Its activity is inhibited by the binding of CbpM. The polypeptide is Curved DNA-binding protein (Shigella dysenteriae serotype 1 (strain Sd197)).